A 43-amino-acid polypeptide reads, in one-letter code: uncharacterized protein (43 aa).

This is an uncharacterized protein from Saccharomyces cerevisiae (strain ATCC 204508 / S288c) (Baker's yeast).